We begin with the raw amino-acid sequence, 483 residues long: Altronate oxidoreductase (483 aa).

Position 18–29 (18–29 (IIQFGEGNFLRA)) interacts with NAD(+).

The protein belongs to the mannitol dehydrogenase family. UxaB subfamily.

The enzyme catalyses D-altronate + NAD(+) = keto-D-tagaturonate + NADH + H(+). The protein operates within carbohydrate metabolism; pentose and glucuronate interconversion. The protein is Altronate oxidoreductase of Klebsiella pneumoniae subsp. pneumoniae (strain ATCC 700721 / MGH 78578).